Here is a 505-residue protein sequence, read N- to C-terminus: Deoxyguanosinetriphosphate triphosphohydrolase (505 aa).

Residues 66 to 273 (RLTHSMEVQQ…MEAADDISYC (208 aa)) enclose the HD domain.

Belongs to the dGTPase family. Type 1 subfamily. As to quaternary structure, homotetramer. The cofactor is Mg(2+).

It catalyses the reaction dGTP + H2O = 2'-deoxyguanosine + triphosphate + H(+). Its function is as follows. dGTPase preferentially hydrolyzes dGTP over the other canonical NTPs. This chain is Deoxyguanosinetriphosphate triphosphohydrolase, found in Salmonella typhimurium (strain LT2 / SGSC1412 / ATCC 700720).